The following is an 89-amino-acid chain: Dynein light chain 1, cytoplasmic (89 aa).

Lys36 is subject to N6-acetyllysine. Residue Lys43 forms a Glycyl lysine isopeptide (Lys-Gly) (interchain with G-Cter in SUMO2) linkage. Residues 67 to 89 are interaction with ESR1; sequence THETKHFIYFYLGQVAILLFKSG. A Phosphoserine modification is found at Ser88.

The protein belongs to the dynein light chain family. Homodimer. Monomer; the monomeric form is incapable of binding to target proteins. The cytoplasmic dynein 1 complex consists of two catalytic heavy chains (HCs) and a number of non-catalytic subunits presented by intermediate chains (ICs), light intermediate chains (LICs) and light chains (LCs); the composition seems to vary in respect to the IC, LIC and LC composition. The heavy chain homodimer serves as a scaffold for the probable homodimeric assembly of the respective non-catalytic subunits. The ICs and LICs bind directly to the HC dimer and the LCs assemble on the IC dimer. Interacts with TXNDC17. Interacts with WWC1 and ESR1. The WWC1-DYNLL1 interaction is mandatory for the recruitment and transactivation functions of ESR1 or DYNLL1 to the target chromatin. Interacts with BCL2L11. Interacts with BCL2; the interaction is greatly enhanced in the nucleus and in mitochondria upon induction of apoptosis. Interacts with PAK1; the interaction requires dimeric DYNLL1. Interacts with MYZAP. Part of an astrin (SPAG5)-kinastrin (SKAP) complex containing KNSTRN, SPAG5, PLK1, DYNLL1 and SGO2. Interacts with ATMIN; this interaction inhibits ATMIN transcriptional activity and hence may play a role in a feedback loop whereby DYNLL1 inhibits transactivation of its own promoter by ATMIN. Interacts with NEK9 (not phosphorylated at 'Ser-944'). Interacts with BICD2. Interacts with BCAS1. Interacts with Basson/BSN. Interacts with HDAC6. Interacts with TPPP. Interacts with AMBRA1 (via TQT motifs); tethering AMBRA1 to the cytoskeleton. Interacts with FAM83D/CHICA (via C-terminus). Interacts with HMMR, SPAG5/Astrin and KNSTRN/Kinastrin. Interacts with TLK2. Interacts with NOS1. Interacts with WWC1, WWC2 and WWC3. Interacts with MRE11; inhibiting MRE11 homodimerization and activity. In terms of assembly, (Microbial infection) Interacts with bovine immunodeficiency virus Gag protein; this interaction is critical for intracellular microtubule-dependent viral genome transport. In terms of processing, phosphorylation at Ser-88 promotes recruitment to DNA double-strand breaks (DSBs) by TP53BP1 and ability to inhibit MRE11.

Its subcellular location is the cytoplasm. The protein resides in the cytoskeleton. It localises to the microtubule organizing center. The protein localises to the centrosome. It is found in the chromosome. Its subcellular location is the nucleus. The protein resides in the mitochondrion. Its function is as follows. Acts as one of several non-catalytic accessory components of the cytoplasmic dynein 1 complex that are thought to be involved in linking dynein to cargos and to adapter proteins that regulate dynein function. Cytoplasmic dynein 1 acts as a motor for the intracellular retrograde motility of vesicles and organelles along microtubules. May play a role in changing or maintaining the spatial distribution of cytoskeletal structures. In addition to its role in cytoskeleton and transport, acts as a protein-protein adapter, which inhibits and/or sequesters target proteins. Involved in the response to DNA damage by acting as a key regulator of DNA end resection: when phosphorylated at Ser-88, recruited to DNA double-strand breaks (DSBs) by TP53BP1 and acts by disrupting MRE11 dimerization, thereby inhibiting DNA end resection. In a subset of DSBs, DYNLL1 remains unphosphorylated and promotes the recruitment of the Shieldin complex. Binds and inhibits the catalytic activity of neuronal nitric oxide synthase/NOS1. Promotes transactivation functions of ESR1 and plays a role in the nuclear localization of ESR1. Regulates apoptotic activities of BCL2L11 by sequestering it to microtubules. Upon apoptotic stimuli the BCL2L11-DYNLL1 complex dissociates from cytoplasmic dynein and translocates to mitochondria and sequesters BCL2 thus neutralizing its antiapoptotic activity. This Bos taurus (Bovine) protein is Dynein light chain 1, cytoplasmic (DYNLL1).